The following is a 259-amino-acid chain: ATP synthase subunit a (259 aa).

The propeptide at 1–7 is removed in mature form; it reads MTNNYIN. Transmembrane regions (helical) follow at residues 36–56, 95–115, 125–145, 164–206, and 211–253; these read FSLY…LSIG, YVPL…IGMV, LIYI…LGLF, LVPV…NLVK, and INYF…SYLK.

As to quaternary structure, F-type ATP synthases have 2 components, the catalytic core F(1) and the membrane-embedded component F(0), linked together by a central stalk and a peripheral stalk. The central stalk, also called rotor shaft, is often seen as part of F(1). The peripheral stalk is seen as part of F(0). F(0) contains the membrane channel next to the rotor. F-type ATP synthases form dimers but each monomer functions independently in ATP generation. The dimer consists of 18 different polypeptides: ATP1 (subunit alpha, part of F(1), 3 molecules per monomer), ATP2 (subunit beta, part of F(1), 3 molecules per monomer), ATP3 (subunit gamma, part of the central stalk), ATP4 (subunit b, part of the peripheral stalk), ATP5/OSCP (subunit 5/OSCP, part of the peripheral stalk), ATP6 (subunit a, part of the peripheral stalk), ATP7 (subunit d, part of the peripheral stalk), ATP8 (subunit 8, part of the peripheral stalk), OLI1 (subunit c, part of the rotor, 10 molecules per monomer), ATP14 (subunit h, part of the peripheral stalk), ATP15 (subunit epsilon, part of the central stalk), ATP16 (subunit delta, part of the central stalk), ATP17 (subunit f, part of the peripheral stalk), ATP18 (subunit i/j, part of the peripheral stalk). Dimer-specific subunits are ATP19 (subunit k, at interface between monomers), ATP20 (subunit g, at interface between monomers), TIM11 (subunit e, at interface between monomers). Also contains subunit L.

It is found in the mitochondrion inner membrane. Mitochondrial membrane ATP synthase (F(1)F(0) ATP synthase or Complex V) produces ATP from ADP in the presence of a proton gradient across the membrane which is generated by electron transport complexes of the respiratory chain. F-type ATP synthases consist of two structural domains, F(1) - containing the extramembraneous catalytic core, and F(0) - containing the membrane proton channel, linked together by a central stalk and a peripheral stalk. During catalysis, ATP synthesis in the catalytic domain of F(1) is coupled via a rotary mechanism of the central stalk subunits to proton translocation. Key component of the proton channel; it may play a direct role in the translocation of protons across the membrane. This is ATP synthase subunit a from Pichia angusta (Yeast).